Here is a 379-residue protein sequence, read N- to C-terminus: Cytochrome b (379 aa).

4 consecutive transmembrane segments (helical) span residues 34 to 54 (FGSL…LLAM), 78 to 99 (WFIR…YLHI), 114 to 134 (WNTG…GYVL), and 179 to 199 (FFAL…VHLT). Positions 84 and 98 each coordinate heme b. Heme b contacts are provided by H183 and H197. Position 202 (H202) interacts with a ubiquinone. Helical transmembrane passes span 227–247 (LKDI…AFFS), 289–309 (LGGV…PLLH), 321–341 (LSQL…WIGS), and 348–368 (FIII…VLFP).

It belongs to the cytochrome b family. In terms of assembly, the cytochrome bc1 complex contains 11 subunits: 3 respiratory subunits (MT-CYB, CYC1 and UQCRFS1), 2 core proteins (UQCRC1 and UQCRC2) and 6 low-molecular weight proteins (UQCRH/QCR6, UQCRB/QCR7, UQCRQ/QCR8, UQCR10/QCR9, UQCR11/QCR10 and a cleavage product of UQCRFS1). This cytochrome bc1 complex then forms a dimer. It depends on heme b as a cofactor.

The protein resides in the mitochondrion inner membrane. In terms of biological role, component of the ubiquinol-cytochrome c reductase complex (complex III or cytochrome b-c1 complex) that is part of the mitochondrial respiratory chain. The b-c1 complex mediates electron transfer from ubiquinol to cytochrome c. Contributes to the generation of a proton gradient across the mitochondrial membrane that is then used for ATP synthesis. The protein is Cytochrome b (MT-CYB) of Struthio camelus (Common ostrich).